The following is a 137-amino-acid chain: Small heat shock protein IbpA (137 aa).

Positions 28-137 (NQSNGGYPPY…SLKPRRIEIK (110 aa)) constitute a sHSP domain.

The protein belongs to the small heat shock protein (HSP20) family. In terms of assembly, monomer. Forms homomultimers of about 100-150 subunits at optimal growth temperatures. Conformation changes to monomers at high temperatures or high ionic concentrations.

The protein resides in the cytoplasm. In terms of biological role, associates with aggregated proteins, together with IbpB, to stabilize and protect them from irreversible denaturation and extensive proteolysis during heat shock and oxidative stress. Aggregated proteins bound to the IbpAB complex are more efficiently refolded and reactivated by the ATP-dependent chaperone systems ClpB and DnaK/DnaJ/GrpE. Its activity is ATP-independent. The chain is Small heat shock protein IbpA from Yersinia pseudotuberculosis serotype O:1b (strain IP 31758).